We begin with the raw amino-acid sequence, 435 residues long: 5-methylthioadenosine/S-adenosylhomocysteine deaminase (435 aa).

Zn(2+) contacts are provided by H65 and H67. Positions 94, 150, and 189 each coordinate substrate. H216 serves as a coordination point for Zn(2+). Substrate is bound by residues E219 and D304. Position 304 (D304) interacts with Zn(2+).

This sequence belongs to the metallo-dependent hydrolases superfamily. MTA/SAH deaminase family. It depends on Zn(2+) as a cofactor.

The catalysed reaction is S-adenosyl-L-homocysteine + H2O + H(+) = S-inosyl-L-homocysteine + NH4(+). The enzyme catalyses S-methyl-5'-thioadenosine + H2O + H(+) = S-methyl-5'-thioinosine + NH4(+). Catalyzes the deamination of 5-methylthioadenosine and S-adenosyl-L-homocysteine into 5-methylthioinosine and S-inosyl-L-homocysteine, respectively. Is also able to deaminate adenosine. The chain is 5-methylthioadenosine/S-adenosylhomocysteine deaminase from Bacillus cereus (strain ATCC 14579 / DSM 31 / CCUG 7414 / JCM 2152 / NBRC 15305 / NCIMB 9373 / NCTC 2599 / NRRL B-3711).